The sequence spans 1849 residues: Protein TANC1 (1849 aa).

Met-1 is subject to N-acetylmethionine. 2 disordered regions span residues 1 to 47 and 59 to 109; these read MLKA…TTED and MSLP…FREG. The segment covering 8 to 21 has biased composition (basic and acidic residues); that stretch reads KSREGVKGSKKEAG. Residues 27-46 show a composition bias toward polar residues; sequence ETPTLSSSGDSPVNSLSTTE. Residues Ser-60, Ser-63, Ser-64, Ser-204, Ser-267, and Ser-455 each carry the phosphoserine modification. Disordered regions lie at residues 264–309 and 430–481; these read DNCS…PRPN and VASS…QRPR. Residues 451 to 468 are compositionally biased toward low complexity; it reads TPLLSPSSSTSALSAART. ANK repeat units lie at residues 886 to 918, 924 to 953, 957 to 986, 990 to 1019, 1030 to 1059, 1068 to 1097, 1101 to 1130, 1134 to 1163, 1167 to 1196, 1200 to 1229, and 1233 to 1262; these read EGLS…NVNY, NNAP…CLDG, NGMN…RVDH, KGQC…SAGP, ALQQ…EHEI, WGET…AVSR, RGVP…DVNP, QGRT…ALSS, EGLS…EIDQ, NGRT…VIEH, and SGMR…KLGN. 3 TPR repeats span residues 1279-1312, 1326-1359, and 1361-1393; these read LQKL…FPRE, VSLY…KPKS, and EAFY…CPTN. Residues 1410-1421 show a composition bias toward low complexity; that stretch reads LQRNQQQKQQAP. Disordered stretches follow at residues 1410–1503, 1527–1605, 1635–1711, and 1812–1849; these read LQRN…ISKS, NQHL…GESG, QGGP…PRNT, and PHLY…ESNV. Phosphoserine occurs at positions 1429 and 1456. Residues 1447-1456 show a composition bias toward acidic residues; it reads EEAEEEDTSS. Composition is skewed to polar residues over residues 1527–1546 and 1593–1603; these read NQHL…KVQV and PSQSLQLQRGE. Residues 1649–1679 are compositionally biased toward low complexity; it reads SLSSSGSSGSPSSSVKMSSSTSSLTSSSSVS. Ser-1658, Ser-1666, and Ser-1667 each carry phosphoserine.

Belongs to the TANC family. Interacts probably directly with DLG1, DLG4, HOMER1. Interacts with DLGAP1, INA, CAMK2A, GRIN2B and GRIA1. Interacts with TNIK and MINK1. In terms of processing, phosphorylated; by MINK1 and TNIK upon stimulation by RAP2A. As to expression, expressed in heart, lung, liver and kidney. Expressed in brain (at protein level).

It is found in the postsynaptic density. Its function is as follows. May be a scaffold component in the postsynaptic density. The chain is Protein TANC1 (Tanc1) from Rattus norvegicus (Rat).